The chain runs to 61 residues: Small ribosomal subunit protein uS14 (61 aa).

Zn(2+) is bound by residues C24, C27, C40, and C43.

It belongs to the universal ribosomal protein uS14 family. Zinc-binding uS14 subfamily. As to quaternary structure, part of the 30S ribosomal subunit. Contacts proteins S3 and S10. Zn(2+) serves as cofactor.

Functionally, binds 16S rRNA, required for the assembly of 30S particles and may also be responsible for determining the conformation of the 16S rRNA at the A site. The polypeptide is Small ribosomal subunit protein uS14 (Halothermothrix orenii (strain H 168 / OCM 544 / DSM 9562)).